The primary structure comprises 502 residues: UDP-N-acetylglucosamine diphosphorylase 2 (502 aa).

The Substrate binding motif lies at 130–133; sequence LSGG. Asparagine 250 is a substrate binding site. The short motif at 332-333 is the Substrate binding element; sequence EY. Lysine 429 is a substrate binding site.

The protein belongs to the UDPGP type 1 family. In terms of assembly, monomer. Requires Mg(2+) as cofactor. It depends on Mn(2+) as a cofactor. In terms of tissue distribution, expressed in root tips, stipules, lateral root primordia, immature anthers and at the branching points of the flowering shoots.

The protein resides in the cytoplasm. It carries out the reaction N-acetyl-alpha-D-glucosamine 1-phosphate + UTP + H(+) = UDP-N-acetyl-alpha-D-glucosamine + diphosphate. It catalyses the reaction N-acetyl-alpha-D-galactosamine 1-phosphate + UTP + H(+) = UDP-N-acetyl-alpha-D-galactosamine + diphosphate. The catalysed reaction is alpha-D-glucose 1-phosphate + UTP + H(+) = UDP-alpha-D-glucose + diphosphate. It participates in nucleotide-sugar biosynthesis; UDP-N-acetyl-alpha-D-glucosamine biosynthesis; UDP-N-acetyl-alpha-D-glucosamine from N-acetyl-alpha-D-glucosamine 1-phosphate: step 1/1. Functionally, uridylyltransferase involved in the biosynthesis of UDP-glucosamine, an essential precursor for glycoprotein and glycolipid synthesis. Can use UDP-glucosamine, the 4-epimer UDP-galactosamine and UDP-glucose as substrates. Acts redundantly with GLCNAC1PUT1. Required for gametogenesis and embryo development. The chain is UDP-N-acetylglucosamine diphosphorylase 2 (GLCNAC1PUT2) from Arabidopsis thaliana (Mouse-ear cress).